The sequence spans 509 residues: 5-hydroxytryptamine receptor (509 aa).

Topologically, residues 1-99 are extracellular; the sequence is MANFTFGDLA…YSHEHLVLTS (99 aa). N-linked (GlcNAc...) asparagine glycosylation is found at Asn-3, Asn-47, Asn-58, Asn-68, Asn-72, and Asn-78. Residues 100-122 traverse the membrane as a helical segment; that stretch reads VILGLFVLCCIIGNCFVIAAVML. The Cytoplasmic segment spans residues 123-132; it reads ERSLHNVANY. Residues 133–154 traverse the membrane as a helical segment; that stretch reads LILSLAVADLMVAVLVMPLSVV. The Extracellular segment spans residues 155–169; sequence SEISKVWFLHSEVCD. A disulfide bond links Cys-168 and Cys-246. Residues 170–191 traverse the membrane as a helical segment; sequence MWISVDVLCCTASILHLVAIAM. Over 192–210 the chain is Cytoplasmic; it reads DRYWAVTSIDYIRRRSARR. A helical transmembrane segment spans residues 211–233; the sequence is ILLMIMVVWIVALFISIPPLFGW. The Extracellular segment spans residues 234–259; sequence RDPNNDPDKTGTCIISQDKGYTIFST. The helical transmembrane segment at 260–281 threads the bilayer; it reads VGAFYLPMLVMMIIYIRIWLVA. Topologically, residues 282–432 are cytoplasmic; it reads RSRIRKDKFQ…LKRERKAART (151 aa). The segment at 323–372 is disordered; sequence SPDSTTEKKKRRAPFKSYGCSPRPERKKNRAKKLPENANGVNSNSSSSER. The helical transmembrane segment at 433–456 threads the bilayer; it reads LAIITGAFLICWLPFFIIALIGPF. At 457-465 the chain is on the extracellular side; the sequence is VDPEGIPPF. A helical membrane pass occupies residues 466-488; sequence ARSFVLWLGYFNSLLNPIIYTIF. Residues 489 to 509 are Cytoplasmic-facing; it reads SPEFRSAFQKILFGKYRRGHR.

This sequence belongs to the G-protein coupled receptor 1 family.

The protein localises to the cell membrane. This is a receptor for 5-hydroxytryptamine (serotonin), a biogenic hormone that function as a neurotransmitter, a hormone, and a mitogen. The polypeptide is 5-hydroxytryptamine receptor (Lymnaea stagnalis (Great pond snail)).